The primary structure comprises 85 residues: Small ribosomal subunit protein uS17 (85 aa).

It belongs to the universal ribosomal protein uS17 family. Part of the 30S ribosomal subunit.

Its function is as follows. One of the primary rRNA binding proteins, it binds specifically to the 5'-end of 16S ribosomal RNA. This is Small ribosomal subunit protein uS17 from Acinetobacter baumannii (strain AB307-0294).